The sequence spans 491 residues: F-box protein At3g59000 (491 aa).

The 49-residue stretch at 1 to 49 folds into the F-box domain; sequence MDRVGSLPDELLSHILSFLTTKEAALTSLLSKRWRYLIAFVPNLAFDDI.

In terms of assembly, part of a SCF (ASK-cullin-F-box) protein ligase complex. Interacts with ASK4.

It localises to the nucleus. It functions in the pathway protein modification; protein ubiquitination. In terms of biological role, component of SCF(ASK-cullin-F-box) E3 ubiquitin ligase complexes, which may mediate the ubiquitination and subsequent proteasomal degradation of target proteins. The chain is F-box protein At3g59000 from Arabidopsis thaliana (Mouse-ear cress).